The primary structure comprises 256 residues: Cilia- and flagella-associated protein 410 (256 aa).

LRR repeat units lie at residues 19–40, 41–62, and 63–84; these read SVRK…QEMP, SLEV…SRCQ, and RLSE…FYLK. The LRRCT domain occupies 97-137; the sequence is NPCCGTSPHRYRMTVLRTLPRLQKLDNQAVTEEELSRALSE. 2 disordered regions span residues 129 to 156 and 168 to 212; these read EELS…GGPK and AETG…SSHR. Phosphoserine is present on residues Ser136 and Ser177.

Found in a complex with CFAP410, NEK1 and SPATA7. Interacts with NEK1. Widely expressed. Expressed in the retina.

It is found in the mitochondrion. The protein localises to the cytoplasm. The protein resides in the cytoskeleton. It localises to the cilium basal body. Its subcellular location is the cell projection. It is found in the cilium. The protein localises to the photoreceptor outer segment. In terms of biological role, plays a role in cilia formation and/or maintenance. Plays a role in the regulation of cell morphology and cytoskeletal organization. Involved in DNA damage repair. This Homo sapiens (Human) protein is Cilia- and flagella-associated protein 410.